The primary structure comprises 276 residues: Putative pyruvate, phosphate dikinase regulatory protein (276 aa).

151–158 (GISRTSKT) serves as a coordination point for ADP.

Belongs to the pyruvate, phosphate/water dikinase regulatory protein family. PDRP subfamily.

The enzyme catalyses N(tele)-phospho-L-histidyl/L-threonyl-[pyruvate, phosphate dikinase] + ADP = N(tele)-phospho-L-histidyl/O-phospho-L-threonyl-[pyruvate, phosphate dikinase] + AMP + H(+). It catalyses the reaction N(tele)-phospho-L-histidyl/O-phospho-L-threonyl-[pyruvate, phosphate dikinase] + phosphate + H(+) = N(tele)-phospho-L-histidyl/L-threonyl-[pyruvate, phosphate dikinase] + diphosphate. Functionally, bifunctional serine/threonine kinase and phosphorylase involved in the regulation of the pyruvate, phosphate dikinase (PPDK) by catalyzing its phosphorylation/dephosphorylation. The chain is Putative pyruvate, phosphate dikinase regulatory protein from Streptococcus agalactiae serotype Ia (strain ATCC 27591 / A909 / CDC SS700).